The chain runs to 253 residues: Triosephosphate isomerase (253 aa).

N8–K10 serves as a coordination point for substrate. Catalysis depends on H93, which acts as the Electrophile. The active-site Proton acceptor is the E165. Residues G171, S210, and G231–G232 contribute to the substrate site.

Belongs to the triosephosphate isomerase family. In terms of assembly, homodimer.

The protein localises to the cytoplasm. The enzyme catalyses D-glyceraldehyde 3-phosphate = dihydroxyacetone phosphate. It participates in carbohydrate biosynthesis; gluconeogenesis. Its pathway is carbohydrate degradation; glycolysis; D-glyceraldehyde 3-phosphate from glycerone phosphate: step 1/1. In terms of biological role, involved in the gluconeogenesis. Catalyzes stereospecifically the conversion of dihydroxyacetone phosphate (DHAP) to D-glyceraldehyde-3-phosphate (G3P). The polypeptide is Triosephosphate isomerase (Francisella tularensis subsp. mediasiatica (strain FSC147)).